We begin with the raw amino-acid sequence, 463 residues long: Spermidine/putrescine import ATP-binding protein PotA (463 aa).

One can recognise an ABC transporter domain in the interval 10-240 (IEVSHVSKFF…PINSFVADFI (231 aa)). 42–49 (GPSGCGKT) is an ATP binding site.

Belongs to the ABC transporter superfamily. Spermidine/putrescine importer (TC 3.A.1.11.1) family. The complex is composed of two ATP-binding proteins (PotA), two transmembrane proteins (PotB and PotC) and a solute-binding protein (PotD).

Its subcellular location is the cell inner membrane. It catalyses the reaction ATP + H2O + polyamine-[polyamine-binding protein]Side 1 = ADP + phosphate + polyamineSide 2 + [polyamine-binding protein]Side 1.. Functionally, part of the ABC transporter complex PotABCD involved in spermidine/putrescine import. Responsible for energy coupling to the transport system. The polypeptide is Spermidine/putrescine import ATP-binding protein PotA (Bacteroides thetaiotaomicron (strain ATCC 29148 / DSM 2079 / JCM 5827 / CCUG 10774 / NCTC 10582 / VPI-5482 / E50)).